The following is a 258-amino-acid chain: Imidazole glycerol phosphate synthase subunit HisF (258 aa).

Catalysis depends on residues D11 and D130.

It belongs to the HisA/HisF family. In terms of assembly, heterodimer of HisH and HisF.

The protein localises to the cytoplasm. It catalyses the reaction 5-[(5-phospho-1-deoxy-D-ribulos-1-ylimino)methylamino]-1-(5-phospho-beta-D-ribosyl)imidazole-4-carboxamide + L-glutamine = D-erythro-1-(imidazol-4-yl)glycerol 3-phosphate + 5-amino-1-(5-phospho-beta-D-ribosyl)imidazole-4-carboxamide + L-glutamate + H(+). The protein operates within amino-acid biosynthesis; L-histidine biosynthesis; L-histidine from 5-phospho-alpha-D-ribose 1-diphosphate: step 5/9. Its function is as follows. IGPS catalyzes the conversion of PRFAR and glutamine to IGP, AICAR and glutamate. The HisF subunit catalyzes the cyclization activity that produces IGP and AICAR from PRFAR using the ammonia provided by the HisH subunit. The chain is Imidazole glycerol phosphate synthase subunit HisF from Serratia proteamaculans (strain 568).